The chain runs to 1804 residues: Obscurin-like protein 1 (1804 aa).

The residue at position 10 (Ser10) is a Phosphoserine. Ig-like domains are found at residues 12-100, 128-225, 241-330, and 339-425; these read PCFL…AAVT, PKFL…ALLQ, PKPV…QTLS, and PRLR…ANVT. Positions 17 to 19 are interaction with TTN; the sequence is FPR. Cysteines 33 and 84 form a disulfide. Residues 85–94 form an interaction with TTN region; the sequence is RARNAAGEAY. A disulfide bridge links Cys149 with Cys209. Residues 227–249 form a disordered region; sequence HQPRESPPQDPDENPKPVLEPLK. Cystine bridges form between Cys267/Cys319 and Cys362/Cys412. Positions 517–615 constitute a Fibronectin type-III domain; it reads PPGPPVMVEM…FNGSAHLVPT (99 aa). 10 consecutive Ig-like domains span residues 720–800, 804–891, 902–982, 986–1075, 1078–1165, 1176–1261, 1266–1442, 1536–1621, 1625–1694, and 1702–1798; these read PQDK…FGVT, PPVH…FTVT, PSSE…FTIT, PPVR…VTVT, PERI…FNVS, PEAA…FNVQ, PPVK…ARLS, PVTI…ARLT, REVS…EDTG, and PAQS…ADTQ. 8 cysteine pairs are disulfide-bonded: Cys738/Cys788, Cys829/Cys879, Cys920/Cys970, Cys1011/Cys1061, Cys1103/Cys1153, Cys1195/Cys1245, Cys1289/Cys1430, and Cys1558/Cys1608.

As to quaternary structure, component of the 3M complex, composed of core components CUL7, CCDC8 and OBSL1. Interacts with CCDC8. Interacts with CUL7; the interaction is direct. Interacts with FBXW8. Interacts (via N-terminal Ig-like domain) with TTN/titin (via C-terminal Ig-like domain); the interaction is direct.

It is found in the cytoplasm. The protein localises to the perinuclear region. The protein resides in the golgi apparatus. Core component of the 3M complex, a complex required to regulate microtubule dynamics and genome integrity. It is unclear how the 3M complex regulates microtubules, it could act by controlling the level of a microtubule stabilizer. Acts as a regulator of the Cul7-RING(FBXW8) ubiquitin-protein ligase, playing a critical role in the ubiquitin ligase pathway that regulates Golgi morphogenesis and dendrite patterning in brain. Required to localize CUL7 to the Golgi apparatus in neurons. The sequence is that of Obscurin-like protein 1 (Obsl1) from Mus musculus (Mouse).